A 268-amino-acid polypeptide reads, in one-letter code: Undecaprenyl-diphosphatase 1 (268 aa).

The next 7 membrane-spanning stretches (helical) occupy residues S5–S25, G43–F63, L84–I104, V107–L127, A184–L204, L218–L238, and A247–I267.

This sequence belongs to the UppP family.

It localises to the cell inner membrane. The enzyme catalyses di-trans,octa-cis-undecaprenyl diphosphate + H2O = di-trans,octa-cis-undecaprenyl phosphate + phosphate + H(+). Its function is as follows. Catalyzes the dephosphorylation of undecaprenyl diphosphate (UPP). Confers resistance to bacitracin. The polypeptide is Undecaprenyl-diphosphatase 1 (Agrobacterium fabrum (strain C58 / ATCC 33970) (Agrobacterium tumefaciens (strain C58))).